Reading from the N-terminus, the 437-residue chain is Xylose isomerase (437 aa).

Residues His102 and Asp105 contribute to the active site. Residues Glu233, Glu269, His272, Asp297, Asp308, Asp310, and Asp340 each contribute to the Mg(2+) site.

The protein belongs to the xylose isomerase family. As to quaternary structure, homotetramer. Mg(2+) is required as a cofactor.

The protein resides in the cytoplasm. The catalysed reaction is alpha-D-xylose = alpha-D-xylulofuranose. This chain is Xylose isomerase, found in Novosphingobium aromaticivorans (strain ATCC 700278 / DSM 12444 / CCUG 56034 / CIP 105152 / NBRC 16084 / F199).